The sequence spans 602 residues: Fumarate reductase flavoprotein subunit (602 aa).

FAD-binding positions include 12 to 16 (GAGGA), 36 to 38 (ISK), 44 to 52 (SHTVAAEGG), 156 to 158 (HFV), 192 to 193 (AT), and aspartate 212. Residue histidine 45 is modified to Tele-8alpha-FAD histidine. Residues histidine 233 and arginine 249 contribute to the active site. FAD is bound by residues 356-357 (HY), glutamate 380, and 391-397 (RLGSNSL). Positions 581 to 602 (YGGEADAADKAEAANKKEKANG) are disordered. Basic and acidic residues predominate over residues 587 to 602 (AADKAEAANKKEKANG).

This sequence belongs to the FAD-dependent oxidoreductase 2 family. FRD/SDH subfamily. Part of an enzyme complex containing four subunits: a flavoprotein (FrdA), an iron-sulfur protein (FrdB), and two hydrophobic anchor proteins (FrdC and FrdD). Can be cross-linked to SdhE. Purified from membrane fractions associated with protoporphyrinogen IX dehydrogenase (hemG). FAD is required as a cofactor.

It localises to the cell inner membrane. It catalyses the reaction a quinone + succinate = fumarate + a quinol. The enzyme catalyses a menaquinone + succinate = a menaquinol + fumarate. With respect to regulation, inhibited by oxaloacetate, a substrate analog. Its function is as follows. Two distinct, membrane-bound, FAD-containing enzymes are responsible for the catalysis of fumarate and succinate interconversion; fumarate reductase is used during anaerobic growth, and succinate dehydrogenase is used during aerobic growth. The QFR enzyme complex binds 2 quinones in or near the membrane; 1 near the [3Fe-4S] cluster (QP is proximal to the [3Fe-4S] cluster, on the cytoplasmic side of the membrane) while QD (the distal cluster) is on the other side of the membrane. It is not clear if both of the quinol-binding sites are functionally relevant. The sequence is that of Fumarate reductase flavoprotein subunit (frdA) from Escherichia coli (strain K12).